Here is a 438-residue protein sequence, read N- to C-terminus: Protein translocase subunit SecY (438 aa).

Transmembrane regions (helical) follow at residues 18–38, 76–96, 121–141, 154–174, 177–197, 212–232, 269–289, 315–335, 375–395, and 398–418; these read ILFT…PSPG, VGVM…VVIP, IALA…GGLL, IFSL…VMWM, LITE…GIAA, GVIF…VVFV, VIPV…TQLV, PVYI…YVSV, LPGS…LQIG, and GEVQ…GVGL.

This sequence belongs to the SecY/SEC61-alpha family. As to quaternary structure, component of the Sec protein translocase complex. Heterotrimer consisting of SecY, SecE and SecG subunits. The heterotrimers can form oligomers, although 1 heterotrimer is thought to be able to translocate proteins. Interacts with the ribosome. Interacts with SecDF, and other proteins may be involved. Interacts with SecA.

The protein resides in the cell membrane. Functionally, the central subunit of the protein translocation channel SecYEG. Consists of two halves formed by TMs 1-5 and 6-10. These two domains form a lateral gate at the front which open onto the bilayer between TMs 2 and 7, and are clamped together by SecE at the back. The channel is closed by both a pore ring composed of hydrophobic SecY resides and a short helix (helix 2A) on the extracellular side of the membrane which forms a plug. The plug probably moves laterally to allow the channel to open. The ring and the pore may move independently. The polypeptide is Protein translocase subunit SecY (Mycobacterium leprae (strain TN)).